A 198-amino-acid polypeptide reads, in one-letter code: Na(+)-translocating NADH-quinone reductase subunit E (198 aa).

6 consecutive transmembrane segments (helical) span residues 11-31 (SIFI…FLAV), 39-59 (FGLG…NNLV), 77-97 (FLNF…LEMI), 110-130 (GIFL…SFMV), 140-160 (VVYG…LAGI), and 176-196 (LGIT…FSGV).

Belongs to the NqrDE/RnfAE family. In terms of assembly, composed of six subunits; NqrA, NqrB, NqrC, NqrD, NqrE and NqrF.

It is found in the cell inner membrane. It carries out the reaction a ubiquinone + n Na(+)(in) + NADH + H(+) = a ubiquinol + n Na(+)(out) + NAD(+). Functionally, NQR complex catalyzes the reduction of ubiquinone-1 to ubiquinol by two successive reactions, coupled with the transport of Na(+) ions from the cytoplasm to the periplasm. NqrA to NqrE are probably involved in the second step, the conversion of ubisemiquinone to ubiquinol. In Vibrio vulnificus (strain CMCP6), this protein is Na(+)-translocating NADH-quinone reductase subunit E.